A 123-amino-acid chain; its full sequence is Large ribosomal subunit protein uL18 (123 aa).

Belongs to the universal ribosomal protein uL18 family. In terms of assembly, part of the 50S ribosomal subunit; part of the 5S rRNA/L5/L18/L25 subcomplex. Contacts the 5S and 23S rRNAs.

This is one of the proteins that bind and probably mediate the attachment of the 5S RNA into the large ribosomal subunit, where it forms part of the central protuberance. This chain is Large ribosomal subunit protein uL18, found in Symbiobacterium thermophilum (strain DSM 24528 / JCM 14929 / IAM 14863 / T).